A 693-amino-acid polypeptide reads, in one-letter code: MASTTLSDLPDVILSTISSLVSDSRARNSLSLVSHKFLALERSTRSHLTIRGNARDLSLVPDCFRSISHLDLSFLSPWGHTLLASLPIDHQNLLALRLKFCFPFVESLNVYTRSPSSLELLLPQWPRIRHIKLLRWHQRASQIPTGGDFVPIFEHCGGFLESLDLSNFYHWTEDLPPVLLRYADVAARLTRLDLLTASFTEGYKSSEIVSITKSCPNLKTFRVACTFDPRYFEFVGDETLSAVATSSPKLTLLHMVDTASLANPRAIPGTEAGDSAVTAGTLIEVFSGLPNLEELVLDVGKDVKHSGVALEALNSKCKKLRVLKLGQFQGVCSATEWRRLDGVALCGGLQSLSIKNSGDLTDMGLVAIGRGCCKLTTFEIQGCENVTVDGLRTMVSLRSKTLTDVRISCCKNLDTAASLKAIEPICDRIKRLHIDCVWSGSEDEEVEGRVETSEADHEEEDDGYERSQKRCKYSFEEEHCSTSDVNGFCSEDRVWEKLEYLSLWINVGEFLTPLPMTGLDDCPNLEEIRIKIEGDCRGKRRPAEPEFGLSCLALYPKLSKMQLDCGDTIGFALTAPPMQMDLSLWERFFLTGIGSLSLSELDYWPPQDRDVNQRSLSLPGAGLLQECLTLRKLFIHGTAHEHFMNFLLRIPNLRDVQLRADYYPAPENDMSTEMRVGSCSRFEDQLNSRNIID.

The region spanning 3–50 is the F-box domain; that stretch reads STTLSDLPDVILSTISSLVSDSRARNSLSLVSHKFLALERSTRSHLTI. LRR repeat units follow at residues 9 to 34, 49 to 74, 75 to 100, 110 to 135, 141 to 167, 168 to 196, 200 to 225, 232 to 257, 274 to 299, 302 to 327, 332 to 356, 357 to 382, 383 to 409, and 410 to 436; these read LPDVILSTISSLVSDSRARNSLSLVS, TIRGNARDLSLVPDCFRSISHLDLSF, LSPWGHTLLASLPIDHQNLLALRLKF, VYTRSPSSLELLLPQWPRIRHIKLLR, SQIPTGGDFVPIFEHCGGFLESLDLSN, FYHWTEDLPPVLLRYADVAARLTRLDLLT, TEGYKSSEIVSITKSCPNLKTFRVAC, FEFVGDETLSAVATSSPKLTLLHMVD, DSAVTAGTLIEVFSGLPNLEELVLDV, DVKHSGVALEALNSKCKKLRVLKLGQ, CSATEWRRLDGVALCGGLQSLSIKN, SGDLTDMGLVAIGRGCCKLTTFEIQG, CENVTVDGLRTMVSLRSKTLTDVRISC, and CKNLDTAASLKAIEPICDRIKRLHIDC. The tract at residues 445-465 is disordered; the sequence is EVEGRVETSEADHEEEDDGYE. LRR repeat units lie at residues 480 to 505, 508 to 532, 541 to 565, and 608 to 637; these read CSTSDVNGFCSEDRVWEKLEYLSLWI, GEFLTPLPMTGLDDCPNLEEIRIKI, RPAEPEFGLSCLALYPKLSKMQLDC, and DRDVNQRSLSLPGAGLLQECLTLRKLFIHG.

In terms of assembly, part of a SCF (SKP1-cullin-F-box) protein ligase complex. Interacts with SKP1A/ASK1. Interacts with CUL1. Interacts with SMXL6, SMXL7 and SMXL8. Interacts with D14. Forms a complex with D14 and SKP1A/ASK1 in presence of strigolactone. Expressed in the vasculature of growing leaves and roots, rosette axillary bud, flowers, siliques, funiculi and stems.

Its subcellular location is the nucleus. Its pathway is protein modification; protein ubiquitination. In terms of biological role, component of SCF(ASK-cullin-F-box) E3 ubiquitin ligase complexes, which may mediate the ubiquitination and subsequent proteasomal degradation of target proteins. Promotes the senescence. Is necessary for responses to strigolactones and karrikins. Contributes to the selective repression of axillary shoots and moderates the branching by regulating negatively the auxin transport in primary stems, in an AXR1-independent manner. Required for the progression of leaf senescence mediated by methyl jasmonate. Required at each node to suppress axillary bud growth. This Arabidopsis thaliana (Mouse-ear cress) protein is F-box protein MAX2.